We begin with the raw amino-acid sequence, 410 residues long: MIQKPRGTRDFLPAEMAQRRFVEQKMRAVAATFGYGEIVTPMFEELELFTIKSGEGIINEMYAFEDKGGRKITLRPEITAAVLRAYVNEAQMAPKPLRWFYFAECFRYERPQKGRYRQFWQFGSELIGADSAAADAEVISLAYELLRCTGVRFVMKVGHLAPMKHLLSGLDAPSQKQVMAALDKRDMDLLGTTLASLDSSDLFEPLKGLVTAKTLPEIFAVTGDIPEKARIEETFGYLEAQNIPFEQNFGIARGLDYYTGMVFEGFADNLGAENQILGGGVYRLAHLFGGKDVPSCGFGIGFDRVLVSLGEITPQTIPVVAVICTPETRIPAYNAASALRSAGITAVMDLLDRGFGAQLSSALKSGASFAVVIGEKEAAAGMITLKDLATAVQTEMSIDNAIEVIHGSCR.

This sequence belongs to the class-II aminoacyl-tRNA synthetase family.

The protein resides in the cytoplasm. The enzyme catalyses tRNA(His) + L-histidine + ATP = L-histidyl-tRNA(His) + AMP + diphosphate + H(+). This Methanocorpusculum labreanum (strain ATCC 43576 / DSM 4855 / Z) protein is Histidine--tRNA ligase.